We begin with the raw amino-acid sequence, 1205 residues long: cGMP-specific 3',5'-cyclic phosphodiesterase (1205 aa).

Residues 1 to 153 are disordered; it reads MTDVSSPAGG…TKASTTASQQ (153 aa). Residues 18 to 32 show a composition bias toward low complexity; the sequence is TTSSSPAATTSASSS. A compositionally biased stretch (polar residues) spans 33–48; the sequence is KPLTNGANKTTISTTA. Positions 62–71 are enriched in low complexity; the sequence is GAIPASSSSG. Residues 83 to 94 are compositionally biased toward polar residues; the sequence is SNNNRPAATNRS. The span at 118–140 shows a compositional bias: low complexity; that stretch reads SSSSPSQSPSQTQASIQTQTSQQ. GAF domains lie at 259–411 and 443–624; these read DIDV…GIGI and NLEC…GLGI. A PDEase domain is found at 654–1052; the sequence is SQDQTEKLTQ…RNWQDLAEKV (399 aa). Residue histidine 730 is the Proton donor of the active site. 4 residues coordinate a divalent metal cation: histidine 734, histidine 770, aspartate 771, and aspartate 956. Disordered regions lie at residues 1093–1122 and 1152–1205; these read QQSQ…TGAL and SHVS…CALL. 2 stretches are compositionally biased toward basic and acidic residues: residues 1098–1109 and 1152–1162; these read GSEDSHTPEHQR and SHVSEDMDDKS. The segment covering 1171–1191 has biased composition (low complexity); sequence ASGSMGRMSASSSTSSAGGQM. Over residues 1195-1205 the composition is skewed to basic residues; it reads SKKRSKLCALL. Cysteine 1202 is subject to Cysteine methyl ester. Cysteine 1202 is lipidated: S-farnesyl cysteine. Positions 1203-1205 are cleaved as a propeptide — removed in mature form; it reads ALL.

This sequence belongs to the cyclic nucleotide phosphodiesterase family. In terms of assembly, interacts with PrBP. Requires a divalent metal cation as cofactor.

The protein resides in the cell membrane. It catalyses the reaction 3',5'-cyclic GMP + H2O = GMP + H(+). Its function is as follows. Has a role regulating cGMP transport in Malpighian tubule principal cells. The sequence is that of cGMP-specific 3',5'-cyclic phosphodiesterase from Drosophila sechellia (Fruit fly).